The sequence spans 265 residues: Mlc titration factor A (265 aa).

The Zn(2+) site is built by histidine 111, histidine 148, histidine 152, and glutamate 211.

Belongs to the MtfA family. Interacts with Mlc. Zn(2+) serves as cofactor.

It localises to the cytoplasm. Its function is as follows. Involved in the modulation of the activity of the glucose-phosphotransferase system (glucose-PTS). Interacts with the transcriptional repressor Mlc, preventing its interaction with DNA and leading to the modulation of expression of genes regulated by Mlc, including ptsG, which encodes the PTS system glucose-specific EIICB component. Functionally, shows zinc-dependent metallopeptidase activity. The chain is Mlc titration factor A from Salmonella paratyphi A (strain AKU_12601).